We begin with the raw amino-acid sequence, 291 residues long: Ribosomal RNA small subunit methyltransferase H (291 aa).

S-adenosyl-L-methionine contacts are provided by residues Gly-36–His-38, Asp-55, Ala-90, Asp-102, and Gln-109.

Belongs to the methyltransferase superfamily. RsmH family.

It is found in the cytoplasm. The catalysed reaction is cytidine(1402) in 16S rRNA + S-adenosyl-L-methionine = N(4)-methylcytidine(1402) in 16S rRNA + S-adenosyl-L-homocysteine + H(+). In terms of biological role, specifically methylates the N4 position of cytidine in position 1402 (C1402) of 16S rRNA. In Thermosipho africanus (strain TCF52B), this protein is Ribosomal RNA small subunit methyltransferase H.